Reading from the N-terminus, the 373-residue chain is Erythronate-4-phosphate dehydrogenase (373 aa).

Substrate is bound by residues serine 45 and threonine 66. NAD(+) is bound by residues aspartate 146 and threonine 173. Arginine 206 is an active-site residue. Aspartate 230 lines the NAD(+) pocket. The active site involves glutamate 235. Histidine 252 serves as the catalytic Proton donor. Glycine 255 is an NAD(+) binding site. Tyrosine 256 is a substrate binding site.

This sequence belongs to the D-isomer specific 2-hydroxyacid dehydrogenase family. PdxB subfamily. In terms of assembly, homodimer.

It is found in the cytoplasm. The enzyme catalyses 4-phospho-D-erythronate + NAD(+) = (R)-3-hydroxy-2-oxo-4-phosphooxybutanoate + NADH + H(+). The protein operates within cofactor biosynthesis; pyridoxine 5'-phosphate biosynthesis; pyridoxine 5'-phosphate from D-erythrose 4-phosphate: step 2/5. In terms of biological role, catalyzes the oxidation of erythronate-4-phosphate to 3-hydroxy-2-oxo-4-phosphonooxybutanoate. The protein is Erythronate-4-phosphate dehydrogenase of Saccharophagus degradans (strain 2-40 / ATCC 43961 / DSM 17024).